The following is a 150-amino-acid chain: UPF0260 protein CGSHiGG_00425 (150 aa).

Belongs to the UPF0260 family.

This chain is UPF0260 protein CGSHiGG_00425, found in Haemophilus influenzae (strain PittGG).